The chain runs to 683 residues: Stromal interaction molecule 1 (683 aa).

Positions 1–22 (MDVCARLALWLLWGLLLHHGQS) are cleaved as a signal peptide. The Extracellular portion of the chain corresponds to 23-211 (LSQSHSEKAT…LLTRHNHLKD (189 aa)). EF-hand domains lie at 62 to 95 (SFDA…EDLN) and 100 to 124 (TVKH…AWKS). Residues Asp-74, Asp-76, Asn-78, Asp-80, and Glu-85 each coordinate Ca(2+). Residues Asn-129 and Asn-169 are each glycosylated (N-linked (GlcNAc...) asparagine). The SAM domain occupies 130 to 198 (WTVDEVVQWL…QLKALDTVLF (69 aa)). The chain crosses the membrane as a helical span at residues 212-232 (FMLVVSIVIGVGGCWFAYIQN). The Cytoplasmic portion of the chain corresponds to 233-683 (RYSKEHMKKM…LKIFKKPLKK (451 aa)). Residues 246–440 (LEGLHRAEQS…IEILCGFQIV (195 aa)) are a coiled coil. Ser-255 is subject to Phosphoserine. The SOAR/CAD stretch occupies residues 342-440 (PEALQKWLQL…IEILCGFQIV (99 aa)). The tract at residues 473 to 481 (DDVDDMDEE) is contributes to fast Ca(2+)-dependent inactivation of CRAC channels. A compositionally biased stretch (low complexity) spans 488-497 (MQSPSLQSSV). Residues 488–535 (MQSPSLQSSVRQRLTEPQHGLGSQRDLTHSDSESSLHMSDRQRLAPKP) are disordered. Thr-502 bears the Phosphothreonine mark. A Phosphoserine modification is found at Ser-510. Residues 513–530 (DLTHSDSESSLHMSDRQR) show a composition bias toward basic and acidic residues. The residue at position 515 (Thr-515) is a Phosphothreonine. Residues Ser-517, Ser-519, Ser-521, Ser-522, Ser-565, Ser-573, Ser-606, Ser-616, and Ser-626 each carry the phosphoserine modification. The interval 597-683 (LSSPALPSGS…LKIFKKPLKK (87 aa)) is disordered. The Microtubule tip localization signal signature appears at 640–643 (TRIP). Acidic residues predominate over residues 653 to 664 (EEDNGSIGEETD). Phosphoserine is present on Ser-658. Thr-663 carries the post-translational modification Phosphothreonine. At Ser-666 the chain carries Phosphoserine. Over residues 668 to 683 (GRKKFPLKIFKKPLKK) the composition is skewed to basic residues. Residues 670 to 683 (KKFPLKIFKKPLKK) are required for generation of inwardly rectifying CRAC currents.

Monomer in the presence of Ca(2+). It oligomerizes in absence of Ca(2+). Forms homooligomers and heterooligomers with STIM2. Interacts with pore-forming subunits of CRAC channels, ORAI1, ORAI2 and ORAI3; this interaction is potentiated upon Ca(2+) store depletion. Interacts (via the transmembrane region and the SOAR/CAD domain) with SPPL3; the interaction promotes the binding of STIM1 to ORAI1. Interacts with ORAI1. Interacts with MAPRE1; probably required for targeting to the growing microtubule plus ends. Interacts with CRACR2A/EFCAB4B; the interaction is direct and takes place in absence of Ca(2+). Forms a complex with CRACR2A/EFCAB4B and ORAI1 at low concentration of Ca(2+), the complex dissociates at elevated Ca(2+) concentrations. Interacts with SARAF, promoting a slow inactivation of STIM1-dependent SOCE activity, possibly by facilitating the deoligomerization of STIM1. Interacts with EFHB; the interaction takes place upon Ca(2+)-store depletion and inhibits the association with SARAF. Interacts with ASPH. Interacts with SLC35G1; intracellular Ca(2+)-dependent. May interact with ATP1A1, ATP2A2, ATP2B1, ATP2B4, KPNB1 and XPO1; through SLC35G1. Interacts with TMEM203. Interacts with STIMATE, promoting STIM1 conformational switch. Interacts with TMEM178A. Interacts with CASQ1 (via C-terminal end and preferentially with the monomeric form); this interaction increases in response to a depletion of intracellular calcium, decreases both STIM1 aggregation and clustering, interaction of STIM1 with ORAI1 and store-operated Ca(2+) entry (SOCE) activity. Glycosylation is required for cell surface expression. In terms of processing, phosphorylated predominantly on Ser residues.

The protein resides in the cell membrane. The protein localises to the endoplasmic reticulum membrane. Its subcellular location is the sarcoplasmic reticulum. It is found in the cytoplasm. It localises to the cytoskeleton. Its function is as follows. Acts as a Ca(2+) sensor that gates two major inward rectifying Ca(2+) channels at the plasma membrane: Ca(2+) release-activated Ca(2+) (CRAC) channels and arachidonate-regulated Ca(2+)-selective (ARC) channels. Plays a role in mediating store-operated Ca(2+) entry (SOCE), a Ca(2+) influx following depletion of intracellular Ca(2+) stores. Upon Ca(2+) depletion, translocates from the endoplasmic reticulum to the plasma membrane where it activates CRAC channel pore-forming subunits ORA1, ORA2 and ORAI3 to generate sustained and oscillatory Ca(2+) entry. Involved in enamel formation. This chain is Stromal interaction molecule 1 (STIM1), found in Bos taurus (Bovine).